Here is a 194-residue protein sequence, read N- to C-terminus: CASP-like protein 4C1 (194 aa).

At 1–35 (MRSPHAFRNGESPTLRDHTHFHSTVTAQKLRRFNS) the chain is on the cytoplasmic side. The chain crosses the membrane as a helical span at residues 36 to 56 (LILLLRLASFSFSLASAVFML). The Extracellular segment spans residues 57 to 74 (TNSRGSASPHWYDFDAFR). A helical transmembrane segment spans residues 75 to 95 (FVFVANAIVALYSVFEMGTCV). Topologically, residues 96 to 114 (WEFSRETTLWPEAFQVWFD) are cytoplasmic. A helical transmembrane segment spans residues 115–135 (FGHDQVFSYLLLSAGSAAAAL). Residues 136–157 (ARTMRGGDTCTANKAFCLQSDV) lie on the Extracellular side of the membrane. A helical transmembrane segment spans residues 158–178 (AIGLGFAAFLFLAFSSCFSGF). Topologically, residues 179–194 (RVACFLITGSRFHLYS) are cytoplasmic.

Belongs to the Casparian strip membrane proteins (CASP) family. In terms of assembly, homodimer and heterodimers.

Its subcellular location is the cell membrane. The chain is CASP-like protein 4C1 from Arabidopsis thaliana (Mouse-ear cress).